Here is a 536-residue protein sequence, read N- to C-terminus: Enterobactin synthase component E (536 aa).

Substrate is bound by residues Asn235, Ser240, Gly309, Val331, Ala335, Asp415, and Lys432. The tract at residues 438–439 (GG) is phosphopantetheine binding. Lys441 is a binding site for substrate.

It belongs to the ATP-dependent AMP-binding enzyme family. EntE subfamily. As to quaternary structure, proteins EntB, EntD, EntE, and EntF form a multienzyme complex called enterobactin synthase. Monomer. EntA and EntE interact together.

Its subcellular location is the membrane. It carries out the reaction 3 2,3-dihydroxybenzoate + 3 L-serine + 6 ATP = enterobactin + 6 AMP + 6 diphosphate + 4 H(+). The enzyme catalyses 2,3-dihydroxybenzoate + holo-[ACP] + ATP = 2,3-dihydroxybenzoyl-[ACP] + AMP + diphosphate. It catalyses the reaction 2,3-dihydroxybenzoyl-5'-AMP + holo-[ACP] = 2,3-dihydroxybenzoyl-[ACP] + AMP + H(+). The protein operates within siderophore biosynthesis; enterobactin biosynthesis. Inhibited by the adenylate analogs, 5'-O-[N-(salicyl)sulfamoyl]adenosine (Sal-AMS) and 5'-O-[N-(2,3-dihydroxybenzoyl)sulfamoyl]adenosine (DHB-AMS). Adenylation of 2,3-dihydroxybenzoate (DHB) is enhanced by a protein-protein interaction between the EntA and EntE. In terms of biological role, involved in the biosynthesis of the siderophore enterobactin (enterochelin), which is a macrocyclic trimeric lactone of N-(2,3-dihydroxybenzoyl)-serine. The serine trilactone serves as a scaffolding for the three catechol functionalities that provide hexadentate coordination for the tightly ligated iron(2+) atoms. EntE processes via a two-step adenylation-ligation reaction (bi-uni-uni-bi ping-pong mechanism). First, it catalyzes the activation of the carboxylate group of 2,3-dihydroxy-benzoate (DHB), via a reversible ATP-dependent pyrophosphate exchange reactions to yield the acyladenylate intermediate 2,3-dihydroxybenzoyl-AMP. It can also transfer AMP to salicylate, 2,4-dihydroxybenzoate, gentisate and 2,3,4-trihydroxybenzoate. In the second step, DHB is transferred from 2,3-dihydroxybenzoyl-AMP onto the phosphopantetheinylated EntB (holo-EntB) to form DHB-holo-EntB. Then this product will serve in the formation of the amide bond between 2,3-dihydroxybenzoate (DHB) and L-serine. It can also transfer adenylated salicylate to holo-EntB. This Escherichia coli (strain K12) protein is Enterobactin synthase component E.